The primary structure comprises 629 residues: tRNA uridine 5-carboxymethylaminomethyl modification enzyme MnmG (629 aa).

FAD is bound at residue Gly13–Gly18. Gly273–Phe287 is a binding site for NAD(+).

This sequence belongs to the MnmG family. In terms of assembly, homodimer. Heterotetramer of two MnmE and two MnmG subunits. It depends on FAD as a cofactor.

It localises to the cytoplasm. NAD-binding protein involved in the addition of a carboxymethylaminomethyl (cmnm) group at the wobble position (U34) of certain tRNAs, forming tRNA-cmnm(5)s(2)U34. The chain is tRNA uridine 5-carboxymethylaminomethyl modification enzyme MnmG from Photorhabdus laumondii subsp. laumondii (strain DSM 15139 / CIP 105565 / TT01) (Photorhabdus luminescens subsp. laumondii).